The chain runs to 530 residues: Ubiquitin carboxyl-terminal hydrolase 17-like protein 5 (530 aa).

A USP domain is found at 80 to 375; it reads AGLQNMGNTC…QAYVLFYIQK (296 aa). C89 serves as the catalytic Nucleophile. The Proton acceptor role is filled by H334. Composition is skewed to basic and acidic residues over residues 382–392 and 398–412; these read SESVSRGREPR and DTDRRATQGELKRDH. Disordered regions lie at residues 382-412 and 477-530; these read SESVSRGREPRALGAEDTDRRATQGELKRDH and NHHP…LVCQ. A compositionally biased stretch (polar residues) spans 493–505; sequence TPTHQESMNTGTL. The segment covering 510 to 524 has biased composition (basic residues); that stretch reads GRARRSKGKNKHSKR.

This sequence belongs to the peptidase C19 family. USP17 subfamily.

The protein resides in the nucleus. It localises to the endoplasmic reticulum. It catalyses the reaction Thiol-dependent hydrolysis of ester, thioester, amide, peptide and isopeptide bonds formed by the C-terminal Gly of ubiquitin (a 76-residue protein attached to proteins as an intracellular targeting signal).. Functionally, deubiquitinating enzyme that removes conjugated ubiquitin from specific proteins to regulate different cellular processes that may include cell proliferation, progression through the cell cycle, apoptosis, cell migration, and the cellular response to viral infection. The sequence is that of Ubiquitin carboxyl-terminal hydrolase 17-like protein 5 (USP17L5) from Homo sapiens (Human).